We begin with the raw amino-acid sequence, 104 residues long: Large ribosomal subunit protein uL24 (104 aa).

The protein belongs to the universal ribosomal protein uL24 family. As to quaternary structure, part of the 50S ribosomal subunit.

One of two assembly initiator proteins, it binds directly to the 5'-end of the 23S rRNA, where it nucleates assembly of the 50S subunit. In terms of biological role, one of the proteins that surrounds the polypeptide exit tunnel on the outside of the subunit. This is Large ribosomal subunit protein uL24 from Pseudomonas savastanoi pv. phaseolicola (strain 1448A / Race 6) (Pseudomonas syringae pv. phaseolicola (strain 1448A / Race 6)).